A 105-amino-acid chain; its full sequence is MAPAKNQENINQKLALVIKSGKYTLGYKSTIKSLRQGKAKLIIIAANTPVLRKSELEYYAMLSKTKVYYFQGGNNELGTAVGKLFRVGVVTVLDAGDSDILTTLA.

It belongs to the eukaryotic ribosomal protein eL30 family.

The chain is Large ribosomal subunit protein eL30 (RPL30) from Eremothecium gossypii (strain ATCC 10895 / CBS 109.51 / FGSC 9923 / NRRL Y-1056) (Yeast).